Consider the following 159-residue polypeptide: Protein HydD (159 aa).

This sequence belongs to the peptidase A31 family.

The sequence is that of Protein HydD (hydD) from Wolinella succinogenes (strain ATCC 29543 / DSM 1740 / CCUG 13145 / JCM 31913 / LMG 7466 / NCTC 11488 / FDC 602W) (Vibrio succinogenes).